Here is a 908-residue protein sequence, read N- to C-terminus: 26S proteasome non-ATPase regulatory subunit 2 (908 aa).

Residue methionine 1 is modified to N-acetylmethionine. The interval 1–52 is disordered; sequence MEEGGRDKAPVQPQQSPAAALGGTDEKPSGKERRDAGDKDKEQELSEEDKQL. Residues 10–20 are compositionally biased toward low complexity; that stretch reads PVQPQQSPAAA. Serine 16 bears the Phosphoserine mark. Threonine 24 bears the Phosphothreonine mark. Residues 24–52 show a composition bias toward basic and acidic residues; sequence TDEKPSGKERRDAGDKDKEQELSEEDKQL. Residues serine 29 and serine 147 each carry the phosphoserine modification. Tyrosine 194 carries the phosphotyrosine modification. 2 positions are modified to phosphoserine: serine 361 and serine 363. 5 PC repeats span residues 409-442, 443-479, 480-514, 517-551, and 560-589; these read SAAASLGMILLWDVDGGLTQIDKYLYSSEDYIKS, GALLACGIVNSGVRNECDPALALLSDYVLHNSNTMRL, GSIFGLGLAYAGSNREDVLTLLLPVMGDSKSSMEV, VTALACGMIAVGSCNGDVTSTILQTIMEKSETELK, and LGLGLNHLGKGEAIEAILAALEVVSEPFRS. Lysine 551 is modified (N6-acetyllysine). The segment covering 623-643 has biased composition (basic and acidic residues); sequence KEKEEDKDKKEKKDKDKKEAP. Residues 623–645 are disordered; it reads KEKEEDKDKKEKKDKDKKEAPAD. PC repeat units follow at residues 692–723 and 742–757; these read LALALISVSNPRLNILDTLSKFSHDADPEVSY and AAMLRQLAQYHAKDPN. Positions 708-903 are required for interaction with UBLCP1; that stretch reads DTLSKFSHDA…LEGFVILRKN (196 aa).

Belongs to the proteasome subunit S2 family. Component of the 19S proteasome regulatory particle complex. The 26S proteasome consists of a 20S core particle (CP) and two 19S regulatory subunits (RP). The regulatory particle is made of a lid composed of 9 subunits, a base containing 6 ATPases and few additional components including PSMD2. Interacts with RPGRIP1L. Interacts with CRY1 in a KDM8-dependent manner. Interacts (via C-terminus) with phosphatase UBLCP1 (via ubiquitin-like domain); the interaction recruits UBLCP1 to the 19S regulatory particle where it dephosphorylates 19S subunit PSMC2/RPT1 which impairs PSMC2 ATPase activity and disrupts 26S proteasome assembly.

Functionally, component of the 26S proteasome, a multiprotein complex involved in the ATP-dependent degradation of ubiquitinated proteins. This complex plays a key role in the maintenance of protein homeostasis by removing misfolded or damaged proteins, which could impair cellular functions, and by removing proteins whose functions are no longer required. Therefore, the proteasome participates in numerous cellular processes, including cell cycle progression, apoptosis, or DNA damage repair. In terms of biological role, binds to the intracellular domain of tumor necrosis factor type 1 receptor. The binding domain of TRAP1 and TRAP2 resides outside the death domain of TNFR1. This Pongo abelii (Sumatran orangutan) protein is 26S proteasome non-ATPase regulatory subunit 2 (PSMD2).